The primary structure comprises 1238 residues: Topoisomerase 1-associated factor 1 (1238 aa).

S626 and S654 each carry phosphoserine. The disordered stretch occupies residues 1008 to 1051; it reads GIARSKKKDKRKRRKGEAKTNLPMFGDQDDERPQTVRERHGVFS. A compositionally biased stretch (basic residues) spans 1010–1023; it reads ARSKKKDKRKRRKG. Basic and acidic residues predominate over residues 1038–1050; the sequence is ERPQTVRERHGVF. Phosphoserine occurs at positions 1056 and 1058. Positions 1159-1218 are disordered; sequence NNNNNQLSDDDVNSESRNSLGSSQPSNSQNMFQSEVYSRKESTKRSLEASAADESDEDEE. Positions 1173–1194 are enriched in polar residues; that stretch reads ESRNSLGSSQPSNSQNMFQSEV. A compositionally biased stretch (basic and acidic residues) spans 1195 to 1205; it reads YSRKESTKRSL. The span at 1209–1218 shows a compositional bias: acidic residues; the sequence is AADESDEDEE. S1213 is subject to Phosphoserine.

This sequence belongs to the timeless family. In terms of assembly, component of the fork protection complex (FPC) consisting of TOF1 and CSM3. Interacts with WSS1 and ESC4.

The protein localises to the nucleus. Its function is as follows. Forms a fork protection complex (FPC) with CSM3 and which is required for chromosome segregation during meiosis and DNA damage repair. FPC coordinates leading and lagging strand synthesis and moves with the replication fork. FPC stabilizes replication forks in a configuration that is recognized by replication checkpoint sensors and protects stalled replication forks against the fork-releasing activity of RRM3 helicase. This Saccharomyces cerevisiae (strain ATCC 204508 / S288c) (Baker's yeast) protein is Topoisomerase 1-associated factor 1 (TOF1).